The primary structure comprises 110 residues: Ig lambda-1 chain V region S178 (110 aa).

Residues 1-106 (QAVVTQESAL…RWVFGGGTKL (106 aa)) form the Ig-like domain.

The sequence is that of Ig lambda-1 chain V region S178 from Mus musculus (Mouse).